We begin with the raw amino-acid sequence, 326 residues long: Phospholipid scramblase 4 (326 aa).

The segment at Met1–Asp32 is disordered. Residues Met1–Met94 form a proline-rich domain (PRD) region. Residues Met1–Lys299 lie on the Cytoplasmic side of the membrane. The SH3-binding 1 motif lies at Asn18–Ala25. Positions Pro30–Tyr33 match the PPxY motif motif. The SH3-binding 2 motif lies at Pro41–Ser49. Residues Tyr79 and Tyr84 each carry the phosphotyrosine; by ABL modification. The SH3-binding 3 motif lies at Met94–Val102. 5 S-palmitoyl cysteine lipidation sites follow: Cys193, Cys194, Cys195, Cys197, and Cys198. The chain crosses the membrane as a helical span at residues Met300–Phe316. Residues Glu317 to Arg326 lie on the Extracellular side of the membrane.

This sequence belongs to the phospholipid scramblase family. As to quaternary structure, interacts with PDCD6. Interacts with KPNA2; this interaction mediates the nucleus import of PLSCR4. Requires Ca(2+) as cofactor. Mg(2+) is required as a cofactor. The cofactor is Zn(2+).

The protein resides in the cell membrane. The protein localises to the nucleus. The catalysed reaction is a 1,2-diacyl-sn-glycero-3-phosphocholine(in) = a 1,2-diacyl-sn-glycero-3-phosphocholine(out). It carries out the reaction a 1,2-diacyl-sn-glycero-3-phospho-L-serine(in) = a 1,2-diacyl-sn-glycero-3-phospho-L-serine(out). Functionally, catalyzes metal ion-induced ATP-independent rapid bidirectional and non-specific movement of phospholipids (lipid scrambling or lipid flip-flop) between the inner and outer leaflet of the plasma membrane and participates in the redistribution of phospholipids between membrane leaflets. Metal ions bind to the calcium-binding site and induce conformation change in the protein. Has a greater affi nity for Ca(2+) than Mg(2+) and Zn(2+). In Mus musculus (Mouse), this protein is Phospholipid scramblase 4.